A 230-amino-acid polypeptide reads, in one-letter code: Cytidylate kinase (230 aa).

12 to 20 (GPSGAGKGT) provides a ligand contact to ATP.

This sequence belongs to the cytidylate kinase family. Type 1 subfamily.

It is found in the cytoplasm. It carries out the reaction CMP + ATP = CDP + ADP. It catalyses the reaction dCMP + ATP = dCDP + ADP. The chain is Cytidylate kinase from Shewanella sp. (strain MR-4).